A 1107-amino-acid chain; its full sequence is RNA-dependent RNA polymerase 1 (1107 aa).

The protein belongs to the RdRP family.

It carries out the reaction RNA(n) + a ribonucleoside 5'-triphosphate = RNA(n+1) + diphosphate. In terms of biological role, RNA-dependent direct polymerase involved in antiviral silencing. Required for the production of some small RNAs (mainly 21 and some 22 nucleotides) derived from the crucifer-infecting tobamovirus (TMV-cg). Required for turnip mosaic virus (TuMV) silencing and accumulation of viral siRNAs. Involved in cucumber mosaic virus (CMV) silencing. Required for the biogenesis of viral secondary siRNAs, process that follows the production of primary siRNAs derived from viral RNA replication. Specifically targets the positive-strand of the 3 RNA genomes of CMV and preferentially amplifies the 5'-terminal siRNAs of each viral genomic RNA. Not involved in the production of siRNAs derived from a single-stranded 336-nucleotide satellite RNA of CMV. This is RNA-dependent RNA polymerase 1 (RDR1) from Arabidopsis thaliana (Mouse-ear cress).